Reading from the N-terminus, the 575-residue chain is Cytoskeleton-associated protein 4 (575 aa).

The disordered stretch occupies residues methionine 1–asparagine 73. Residues methionine 1 to arginine 85 are Cytoplasmic-facing. Phosphoserine occurs at positions 3, 17, and 19. Residue lysine 21 is modified to N6-acetyllysine. Pro residues predominate over residues proline 37–histidine 53. Cysteine 79 is lipidated: S-palmitoyl cysteine; by ZDHHC2. A helical transmembrane segment spans residues valine 86–histidine 108. At valine 109–isoleucine 575 the chain is on the extracellular side. Residues arginine 125–aspartate 193 adopt a coiled-coil conformation. Phosphoserine occurs at positions 211, 292, and 367. 2 coiled-coil regions span residues aspartate 236–leucine 438 and serine 507–isoleucine 575.

As to quaternary structure, interacts with REEP5. Reversibly palmitoylated. Palmitoylation at Cys-79 by DHHC2 is required for its trafficking from the ER to the plasma membrane and for its perinuclear localization. Post-translationally, increased phosphorylation during mitosis prevents binding to microtubules. In terms of tissue distribution, expressed in cardiomyocytes (at protein level).

It is found in the endoplasmic reticulum membrane. The protein localises to the cell membrane. Its subcellular location is the cytoplasm. It localises to the cytoskeleton. The protein resides in the perinuclear region. High-affinity epithelial cell surface receptor for APF. Its function is as follows. Mediates the anchoring of the endoplasmic reticulum to microtubules. The sequence is that of Cytoskeleton-associated protein 4 (Ckap4) from Mus musculus (Mouse).